Reading from the N-terminus, the 227-residue chain is Chloronitrobenzene nitroreductase (227 aa).

14–18 (RRTKR) contacts FMN. Ser44 contacts NADP(+). FMN-binding positions include 172–173 (GL) and Arg215.

This sequence belongs to the nitroreductase family. The cofactor is FMN.

The catalysed reaction is N-phenylhydroxylamine + 2 NADP(+) + H2O = nitrobenzene + 2 NADPH + 2 H(+). Its pathway is xenobiotic degradation; nitrobenzene degradation. It functions in the pathway xenobiotic degradation; 4-chloronitrobenzene degradation. Involved in the biodegradation of chlorinated nitroaromatic compounds. Catalyzes the reduction of 4-chloronitrobenzene to yield 1-hydroxylamino-4-chlorobenzene. Probably also able to catalyze the two-electron reduction of nitrobenzene (NB) to produce a nitrosobenzene (NOB) intermediate, which is immediately reduced to hydroxylaminobenzene (HAB) by a second two-electron transfer. This is Chloronitrobenzene nitroreductase from Comamonas testosteroni (Pseudomonas testosteroni).